A 511-amino-acid polypeptide reads, in one-letter code: Alpha-amylase 1A (511 aa).

The N-terminal stretch at 1–15 (MKLFWLLFTIGFCWA) is a signal peptide. Q16 is modified (pyrrolidone carboxylic acid). Intrachain disulfides connect C43–C101, C85–C130, and C156–C175. N115, R173, and D182 together coordinate Ca(2+). R210 serves as a coordination point for chloride. Catalysis depends on D212, which acts as the Nucleophile. Ca(2+) is bound at residue H216. The Proton donor role is filled by E248. N313 and R352 together coordinate chloride. At N365 the chain carries Deamidated asparagine; partial. C393 and C399 are oxidised to a cystine. N427 carries the deamidated asparagine; partial; alternate modification. N-linked (GlcNAc...) asparagine glycosylation occurs at N427. The cysteines at positions 465 and 477 are disulfide-linked. N474 is modified (deamidated asparagine; partial). N476 carries an N-linked (GlcNAc...) asparagine glycan.

This sequence belongs to the glycosyl hydrolase 13 family. In terms of assembly, monomer. Requires Ca(2+) as cofactor. Chloride serves as cofactor.

Its subcellular location is the secreted. It carries out the reaction Endohydrolysis of (1-&gt;4)-alpha-D-glucosidic linkages in polysaccharides containing three or more (1-&gt;4)-alpha-linked D-glucose units.. Its function is as follows. Calcium-binding enzyme that initiates starch digestion in the oral cavity. Catalyzes the hydrolysis of internal (1-&gt;4)-alpha-D-glucosidic bonds, yielding a mixture of maltose, isomaltose, small amounts of glucose as well as small linear and branched oligosaccharides called dextrins. The chain is Alpha-amylase 1A from Homo sapiens (Human).